A 140-amino-acid polypeptide reads, in one-letter code: Ribosome-binding factor A (140 aa).

It belongs to the RbfA family. In terms of assembly, monomer. Binds 30S ribosomal subunits, but not 50S ribosomal subunits or 70S ribosomes.

It is found in the cytoplasm. Functionally, one of several proteins that assist in the late maturation steps of the functional core of the 30S ribosomal subunit. Associates with free 30S ribosomal subunits (but not with 30S subunits that are part of 70S ribosomes or polysomes). Required for efficient processing of 16S rRNA. May interact with the 5'-terminal helix region of 16S rRNA. In Cereibacter sphaeroides (strain ATCC 17025 / ATH 2.4.3) (Rhodobacter sphaeroides), this protein is Ribosome-binding factor A.